Consider the following 373-residue polypeptide: Geraniol dehydrogenase (373 aa).

Cys-47, His-67, Cys-96, Cys-99, Cys-102, Cys-110, and Cys-175 together coordinate Zn(2+).

This sequence belongs to the zinc-containing alcohol dehydrogenase family. As to quaternary structure, homodimer. Zn(2+) is required as a cofactor.

The catalysed reaction is (2E)-geraniol + NAD(+) = (2E)-geranial + NADH + H(+). It carries out the reaction perillyl alcohol + NAD(+) = perillyl aldehyde + NADH + H(+). It participates in terpene metabolism; monoterpene degradation. With respect to regulation, is inhibited by EDTA, N-ethylmaleimide, diethylpyrocarbonate, and 1-cyclohexyl-N-(2-morpholinoethyl)carbodiimide in vitro. In terms of biological role, involved in the degradation of the monoterpenes beta-myrcene and limonene. During anaerobic degradation of beta-myrcene, catalyzes the NAD(+)-dependent oxidation of geraniol to geranial. Can also catalyze the oxidation of (S)-perillyl alcohol to perillyl aldehyde, and to a lesser extent, the oxidation of nerol, citronellol, cumic alcohol, and benzyl alcohol. Cannot use NADP(+) instead of NAD(+) as cosubstrate. This chain is Geraniol dehydrogenase, found in Castellaniella defragrans (strain DSM 12143 / CCUG 39792 / 65Phen) (Alcaligenes defragrans).